The primary structure comprises 629 residues: tRNA uridine 5-carboxymethylaminomethyl modification enzyme MnmG (629 aa).

13-18 is an FAD binding site; sequence GGGHAG. Position 273 to 287 (273 to 287) interacts with NAD(+); it reads GPRYCPSIEDKITRF.

This sequence belongs to the MnmG family. Homodimer. Heterotetramer of two MnmE and two MnmG subunits. The cofactor is FAD.

It localises to the cytoplasm. NAD-binding protein involved in the addition of a carboxymethylaminomethyl (cmnm) group at the wobble position (U34) of certain tRNAs, forming tRNA-cmnm(5)s(2)U34. The sequence is that of tRNA uridine 5-carboxymethylaminomethyl modification enzyme MnmG from Aeromonas hydrophila subsp. hydrophila (strain ATCC 7966 / DSM 30187 / BCRC 13018 / CCUG 14551 / JCM 1027 / KCTC 2358 / NCIMB 9240 / NCTC 8049).